Consider the following 204-residue polypeptide: Small ribosomal subunit protein uS4 (204 aa).

The segment at glycine 21 to serine 45 is disordered. One can recognise an S4 RNA-binding domain in the interval arginine 93–valine 156.

This sequence belongs to the universal ribosomal protein uS4 family. Part of the 30S ribosomal subunit. Contacts protein S5. The interaction surface between S4 and S5 is involved in control of translational fidelity.

One of the primary rRNA binding proteins, it binds directly to 16S rRNA where it nucleates assembly of the body of the 30S subunit. In terms of biological role, with S5 and S12 plays an important role in translational accuracy. The sequence is that of Small ribosomal subunit protein uS4 from Acidiphilium cryptum (strain JF-5).